The chain runs to 423 residues: Transducer protein Htr13 (423 aa).

A compositionally biased stretch (polar residues) spans Met-1 to Val-19. The interval Met-1 to Ser-21 is disordered. One can recognise a Methyl-accepting transducer domain in the interval Ala-152–Ala-388.

This sequence belongs to the methyl-accepting chemotaxis (MCP) protein family. In terms of processing, methylated by CheR.

It localises to the cytoplasm. In terms of biological role, potentially involved in chemo- or phototactic signal transduction. This Halobacterium salinarum (strain ATCC 29341 / DSM 671 / R1) protein is Transducer protein Htr13 (htr13).